A 91-amino-acid chain; its full sequence is Cell division topological specificity factor (91 aa).

Belongs to the MinE family.

In terms of biological role, prevents the cell division inhibition by proteins MinC and MinD at internal division sites while permitting inhibition at polar sites. This ensures cell division at the proper site by restricting the formation of a division septum at the midpoint of the long axis of the cell. This is Cell division topological specificity factor from Wigglesworthia glossinidia brevipalpis.